A 209-amino-acid polypeptide reads, in one-letter code: Ribosomal RNA large subunit methyltransferase E (209 aa).

G63, W65, D83, D99, and D124 together coordinate S-adenosyl-L-methionine. K164 serves as the catalytic Proton acceptor.

Belongs to the class I-like SAM-binding methyltransferase superfamily. RNA methyltransferase RlmE family.

It is found in the cytoplasm. The catalysed reaction is uridine(2552) in 23S rRNA + S-adenosyl-L-methionine = 2'-O-methyluridine(2552) in 23S rRNA + S-adenosyl-L-homocysteine + H(+). Functionally, specifically methylates the uridine in position 2552 of 23S rRNA at the 2'-O position of the ribose in the fully assembled 50S ribosomal subunit. This is Ribosomal RNA large subunit methyltransferase E from Shewanella oneidensis (strain ATCC 700550 / JCM 31522 / CIP 106686 / LMG 19005 / NCIMB 14063 / MR-1).